Here is a 439-residue protein sequence, read N- to C-terminus: Coiled-coil domain-containing protein 166 (439 aa).

A disordered region spans residues 1–28; the sequence is MAPKKKRGPSAGSQPGGAAAAGAEQPLS. A compositionally biased stretch (low complexity) spans 9–23; sequence PSAGSQPGGAAAAGA. 2 coiled-coil regions span residues 27 to 74 and 121 to 213; these read LSER…EENR and DGVR…VRAL. Positions 276–439 are disordered; the sequence is PGGPPLWERP…AAAEASPGRA (164 aa). Polar residues predominate over residues 338 to 365; the sequence is VLSSMDSRVPSLATSKVGSRMPSLTASR. Composition is skewed to low complexity over residues 376 to 392 and 428 to 439; these read SLEGSGISSGSSPRVSS and AEAAAEASPGRA.

This is Coiled-coil domain-containing protein 166 (CCDC166) from Homo sapiens (Human).